The primary structure comprises 463 residues: Glutamate--tRNA ligase 1 (463 aa).

A 'HIGH' region motif is present at residues 10-20; that stretch reads PSPTGYLHIGG. The short motif at 238-242 is the 'KMSKS' region element; it reads KLSKR. K241 lines the ATP pocket.

It belongs to the class-I aminoacyl-tRNA synthetase family. Glutamate--tRNA ligase type 1 subfamily. In terms of assembly, monomer.

The protein localises to the cytoplasm. The catalysed reaction is tRNA(Glu) + L-glutamate + ATP = L-glutamyl-tRNA(Glu) + AMP + diphosphate. In terms of biological role, catalyzes the attachment of glutamate to tRNA(Glu) in a two-step reaction: glutamate is first activated by ATP to form Glu-AMP and then transferred to the acceptor end of tRNA(Glu). In Helicobacter pylori (strain Shi470), this protein is Glutamate--tRNA ligase 1.